The primary structure comprises 257 residues: Protein YIPF5 (257 aa).

Topologically, residues 1 to 124 (MSGFDNFNTD…KASDGSIMNE (124 aa)) are cytoplasmic. The chain crosses the membrane as a helical span at residues 125-145 (TDLAGPMVFCLAFGATLLLTG). Position 146 (Lys146) is a topological domain, lumenal. Residues 147–167 (IQFGYVYGISAIGCLGMYCLL) form a helical membrane-spanning segment. Topologically, residues 168 to 173 (NLMSMT) are cytoplasmic. A helical transmembrane segment spans residues 174 to 194 (GVSFGCVASVLGYCLLPMIIL). The Lumenal portion of the chain corresponds to 195–196 (SS). The helical transmembrane segment at 197–217 (FGVIFSLQGIMGIILTAAIIG) threads the bilayer. The Cytoplasmic segment spans residues 218–236 (WCSLSASKIFISALAMDGQ). Residues 237–257 (QLLVAYPCALLYGVFALISVF) form a helical membrane-spanning segment.

Belongs to the YIP1 family.

It is found in the endoplasmic reticulum membrane. It localises to the golgi apparatus. The protein localises to the cis-Golgi network membrane. Functionally, plays a role in transport between endoplasmic reticulum and Golgi. The sequence is that of Protein YIPF5 (yipf5) from Danio rerio (Zebrafish).